A 448-amino-acid polypeptide reads, in one-letter code: Homogentisate 1,2-dioxygenase (448 aa).

Histidine 303 (proton acceptor) is an active-site residue. Residues histidine 346 and glutamate 352 each contribute to the Fe cation site. 2 residues coordinate homogentisate: tyrosine 361 and histidine 382. Histidine 382 is a Fe cation binding site.

The protein belongs to the homogentisate dioxygenase family. Hexamer; dimer of trimers. Fe cation is required as a cofactor.

It carries out the reaction homogentisate + O2 = 4-maleylacetoacetate + H(+). It participates in amino-acid degradation; L-phenylalanine degradation; acetoacetate and fumarate from L-phenylalanine: step 4/6. Its function is as follows. Involved in the catabolism of homogentisate (2,5-dihydroxyphenylacetate or 2,5-OH-PhAc), a central intermediate in the degradation of phenylalanine and tyrosine. Catalyzes the oxidative ring cleavage of the aromatic ring of homogentisate to yield maleylacetoacetate. The chain is Homogentisate 1,2-dioxygenase from Rhodopseudomonas palustris (strain BisB5).